Reading from the N-terminus, the 436-residue chain is GTPase Der (436 aa).

2 consecutive EngA-type G domains span residues 4-167 (PVIA…PKIE) and 176-351 (IRFS…ESHS). Residues 10 to 17 (GRPNVGKS), 57 to 61 (DTGGI), 119 to 122 (NKVD), 182 to 189 (GRPNVGKS), 229 to 233 (DTAGM), and 294 to 297 (NKWD) contribute to the GTP site. Residues 352–436 (IRVQTNVLND…PIHIIARARD (85 aa)) form the KH-like domain.

This sequence belongs to the TRAFAC class TrmE-Era-EngA-EngB-Septin-like GTPase superfamily. EngA (Der) GTPase family. Associates with the 50S ribosomal subunit.

GTPase that plays an essential role in the late steps of ribosome biogenesis. This is GTPase Der from Bacillus mycoides (strain KBAB4) (Bacillus weihenstephanensis).